The following is a 125-amino-acid chain: PEP-dependent dihydroxyacetone kinase 2, phosphoryl donor subunit DhaM (125 aa).

The region spanning 1–125 is the PTS EIIA type-4 domain; it reads MISIVLVSHS…AILQELTNVH (125 aa). His-9 serves as the catalytic Tele-phosphohistidine intermediate.

Belongs to the PEP-utilizing enzyme family. As to quaternary structure, homodimer. The dihydroxyacetone kinase complex is composed of a homodimer of DhaM, a homodimer of DhaK and the subunit DhaL.

Its subcellular location is the cytoplasm. The catalysed reaction is dihydroxyacetone + phosphoenolpyruvate = dihydroxyacetone phosphate + pyruvate. Its function is as follows. Component of the dihydroxyacetone kinase complex, which is responsible for the phosphoenolpyruvate (PEP)-dependent phosphorylation of dihydroxyacetone. DhaM serves as the phosphoryl donor. Is phosphorylated by phosphoenolpyruvate in an EI- and HPr-dependent reaction, and a phosphorelay system on histidine residues finally leads to phosphoryl transfer to DhaL and dihydroxyacetone. This is PEP-dependent dihydroxyacetone kinase 2, phosphoryl donor subunit DhaM from Listeria innocua serovar 6a (strain ATCC BAA-680 / CLIP 11262).